The following is a 376-amino-acid chain: PqqA peptide cyclase (376 aa).

The region spanning 7–222 (VGLPLWLLAE…TNEYRDKLKA (216 aa)) is the Radical SAM core domain. [4Fe-4S] cluster is bound by residues Cys21, Cys25, and Cys28.

Belongs to the radical SAM superfamily. PqqE family. Interacts with PqqD. The interaction is necessary for activity of PqqE. [4Fe-4S] cluster serves as cofactor.

The enzyme catalyses [PQQ precursor protein] + S-adenosyl-L-methionine = E-Y cross-linked-[PQQ precursor protein] + 5'-deoxyadenosine + L-methionine + H(+). It functions in the pathway cofactor biosynthesis; pyrroloquinoline quinone biosynthesis. Functionally, catalyzes the cross-linking of a glutamate residue and a tyrosine residue in the PqqA protein as part of the biosynthesis of pyrroloquinoline quinone (PQQ). This chain is PqqA peptide cyclase, found in Pseudomonas putida (strain ATCC 700007 / DSM 6899 / JCM 31910 / BCRC 17059 / LMG 24140 / F1).